The primary structure comprises 130 residues: Large ribosomal subunit protein bL19 (130 aa).

It belongs to the bacterial ribosomal protein bL19 family.

In terms of biological role, this protein is located at the 30S-50S ribosomal subunit interface and may play a role in the structure and function of the aminoacyl-tRNA binding site. In Parvibaculum lavamentivorans (strain DS-1 / DSM 13023 / NCIMB 13966), this protein is Large ribosomal subunit protein bL19.